A 313-amino-acid chain; its full sequence is Pyrimidine-specific ribonucleoside hydrolase RihA (313 aa).

Residue histidine 240 is part of the active site.

It belongs to the IUNH family. RihA subfamily.

Hydrolyzes cytidine or uridine to ribose and cytosine or uracil, respectively. This chain is Pyrimidine-specific ribonucleoside hydrolase RihA, found in Enterobacter sp. (strain 638).